A 2352-amino-acid polypeptide reads, in one-letter code: Ectopic P granules protein 5 (2352 aa).

Disordered regions lie at residues 1–112 (MAEL…IFPR) and 1315–1335 (KNRESPLPPEIGSPRSRSSAK). Positions 66 to 81 (DSLKREEASEPLKDVR) are enriched in basic and acidic residues.

It belongs to the EPG5 family. As to expression, expressed in pharyngeal and body wall muscles and intestine cells.

It is found in the cytoplasm. It localises to the cytoplasmic vesicle. Its subcellular location is the phagosome membrane. Functionally, involved in the maturation of autophagosomes into autolysosomes during starvation-induced autotrophy. Specifically, involved in the clearance of apoptotic cells by promoting the delivery of engulfed apoptotic cells to the lysosome. The protein is Ectopic P granules protein 5 of Caenorhabditis elegans.